The following is a 591-amino-acid chain: ATP-dependent lipid A-core flippase (591 aa).

The next 5 membrane-spanning stretches (helical) occupy residues 34–54, 71–91, 158–178, 258–278, and 285–305; these read LILA…LAVI, IWSV…CNFF, LVVI…TVII, LTPL…AVAL, and TLTA…FDPI. One can recognise an ABC transmembrane type-1 domain in the interval 35-317; sequence ILAVLLMAGA…LTNLASKMQK (283 aa). In terms of domain architecture, ABC transporter spans 350-586; that stretch reads IEFRQIGHRF…GGLYATLYNM (237 aa). 384 to 391 lines the ATP pocket; it reads GRSGSGKT.

It belongs to the ABC transporter superfamily. Lipid exporter (TC 3.A.1.106) family. As to quaternary structure, homodimer.

Its subcellular location is the cell inner membrane. It carries out the reaction ATP + H2O + lipid A-core oligosaccharideSide 1 = ADP + phosphate + lipid A-core oligosaccharideSide 2.. In terms of biological role, involved in lipopolysaccharide (LPS) biosynthesis. Translocates lipid A-core from the inner to the outer leaflet of the inner membrane. Transmembrane domains (TMD) form a pore in the inner membrane and the ATP-binding domain (NBD) is responsible for energy generation. The sequence is that of ATP-dependent lipid A-core flippase from Bordetella avium (strain 197N).